The following is a 1109-amino-acid chain: Hybrid signal transduction histidine kinase F (1109 aa).

Residues leucine 237–glutamate 289 enclose the PAC domain. The 224-residue stretch at threonine 324–glutamine 547 folds into the Histidine kinase domain. At histidine 327 the chain carries Phosphohistidine; by autocatalysis. Residues serine 719–valine 760 are a coiled coil. Residues leucine 739 to glutamine 758 are compositionally biased toward low complexity. Positions leucine 739–glutamate 819 are disordered. Positions aspartate 767–tyrosine 782 are enriched in basic and acidic residues. In terms of domain architecture, Response regulatory spans arginine 928 to leucine 1048. Residue aspartate 977 is modified to 4-aspartylphosphate. The segment covering asparagine 1052–asparagine 1099 has biased composition (low complexity). A disordered region spans residues asparagine 1052–isoleucine 1109. Polar residues predominate over residues tyrosine 1100–isoleucine 1109.

It catalyses the reaction ATP + protein L-histidine = ADP + protein N-phospho-L-histidine.. Acts as a receptor histidine kinase for a signal transduction pathway. This protein undergoes an ATP-dependent autophosphorylation at a conserved histidine residue in the kinase core, and a phosphoryl group is then transferred to a conserved aspartate residue in the receiver domain. This is Hybrid signal transduction histidine kinase F (dhkF) from Dictyostelium discoideum (Social amoeba).